The sequence spans 285 residues: Ret finger protein-like 4A (285 aa).

An RING-type; degenerate zinc finger spans residues C11–S53. Residues E78–S276 form the B30.2/SPRY domain.

As to quaternary structure, interacts with PSMB1, UBE2A and CCNB1.

The protein localises to the cytoplasm. It is found in the nucleus. The sequence is that of Ret finger protein-like 4A (Rfpl4a) from Rattus norvegicus (Rat).